The sequence spans 172 residues: Large ribosomal subunit protein uL10 (172 aa).

The protein belongs to the universal ribosomal protein uL10 family. In terms of assembly, part of the ribosomal stalk of the 50S ribosomal subunit. The N-terminus interacts with L11 and the large rRNA to form the base of the stalk. The C-terminus forms an elongated spine to which L12 dimers bind in a sequential fashion forming a multimeric L10(L12)X complex.

Functionally, forms part of the ribosomal stalk, playing a central role in the interaction of the ribosome with GTP-bound translation factors. In Rhodospirillum rubrum (strain ATCC 11170 / ATH 1.1.1 / DSM 467 / LMG 4362 / NCIMB 8255 / S1), this protein is Large ribosomal subunit protein uL10.